Here is a 333-residue protein sequence, read N- to C-terminus: Glyceraldehyde-3-phosphate dehydrogenase (333 aa).

NAD(+) contacts are provided by residues 11 to 12, aspartate 35, methionine 79, and serine 121; that span reads RI. D-glyceraldehyde 3-phosphate contacts are provided by residues 150 to 152, threonine 181, 210 to 211, and arginine 233; these read SCT and TG. Cysteine 151 functions as the Nucleophile in the catalytic mechanism. Residue asparagine 315 coordinates NAD(+).

It belongs to the glyceraldehyde-3-phosphate dehydrogenase family. Homotetramer.

The protein localises to the cytoplasm. The catalysed reaction is D-glyceraldehyde 3-phosphate + phosphate + NAD(+) = (2R)-3-phospho-glyceroyl phosphate + NADH + H(+). It participates in carbohydrate degradation; glycolysis; pyruvate from D-glyceraldehyde 3-phosphate: step 1/5. Functionally, catalyzes the oxidative phosphorylation of glyceraldehyde 3-phosphate (G3P) to 1,3-bisphosphoglycerate (BPG) using the cofactor NAD. The first reaction step involves the formation of a hemiacetal intermediate between G3P and a cysteine residue, and this hemiacetal intermediate is then oxidized to a thioester, with concomitant reduction of NAD to NADH. The reduced NADH is then exchanged with the second NAD, and the thioester is attacked by a nucleophilic inorganic phosphate to produce BPG. This is Glyceraldehyde-3-phosphate dehydrogenase (gap) from Bacteroides fragilis (strain YCH46).